Here is a 1069-residue protein sequence, read N- to C-terminus: Calcium-transporting ATPase 10, plasma membrane-type (1069 aa).

Positions 1–29 (MSGQFNNSPRGEDKDVEAGTSSFTEYEDS) are disordered. Ser-2 is modified (N-acetylserine). At 2-180 (SGQFNNSPRG…NTYPQKKGRS (179 aa)) the chain is on the cytoplasmic side. An interaction with calmodulin region spans residues 42-53 (ERLRRWRQAALV). The helical transmembrane segment at 181-201 (FWRFVWEASQDLTLIILIVAA) threads the bilayer. Residues 202–219 (VASLALGIKTEGIEKGWY) are Lumenal-facing. The helical transmembrane segment at 220-240 (DGISIAFAVLLVIVVTATSDY) threads the bilayer. The Cytoplasmic segment spans residues 241-369 (RQSLQFQNLN…GGETPLQVRL (129 aa)). A helical transmembrane segment spans residues 370-389 (NGVATFIGIVGLTVAGVVLF). The Lumenal portion of the chain corresponds to 390–426 (VLVVRYFTGHTKNEQGGPQFIGGKTKFEHVLDDLVEI). The helical transmembrane segment at 427–444 (FTVAVTIVVVAVPEGLPL) threads the bilayer. Topologically, residues 445–844 (AVTLTLAYSM…RWGRSVYANI (400 aa)) are cytoplasmic. Asp-482 acts as the 4-aspartylphosphate intermediate in catalysis. Mg(2+) contacts are provided by Asp-789 and Asp-793. The chain crosses the membrane as a helical span at residues 845–863 (QKFIQFQLTVNVAALVINV). The Lumenal portion of the chain corresponds to 864–874 (VAAISAGEVPL). The helical transmembrane segment at 875–895 (TAVQLLWVNLIMDTLGALALA) threads the bilayer. Residues 896–915 (TEPPTDHLMDRAPVGRREPL) lie on the Cytoplasmic side of the membrane. The chain crosses the membrane as a helical span at residues 916–938 (ITNIMWRNLFIQAMYQVTVLLIL). Residues 939 to 951 (NFRGISILHLKSK) are Lumenal-facing. A helical membrane pass occupies residues 952–973 (PNAERVKNTVIFNAFVICQVFN). Over 974–991 (EFNARKPDEINIFRGVLR) the chain is Cytoplasmic. Residues 992–1013 (NHLFVGIISITIVLQVVIVEFL) form a helical membrane-spanning segment. Residues 1014-1023 (GTFASTTKLD) are Lumenal-facing. Residues 1024-1045 (WEMWLVCIGIGSISWPLAVIGK) form a helical membrane-spanning segment. At 1046–1069 (LIPVPETPVSQYFRINRWRRNSSG) the chain is on the cytoplasmic side.

It belongs to the cation transport ATPase (P-type) (TC 3.A.3) family. Type IIB subfamily.

Its subcellular location is the membrane. It carries out the reaction Ca(2+)(in) + ATP + H2O = Ca(2+)(out) + ADP + phosphate + H(+). With respect to regulation, activated by calmodulin. Its function is as follows. This magnesium-dependent enzyme catalyzes the hydrolysis of ATP coupled with the translocation of calcium from the cytosol into the endoplasmic reticulum. This is Calcium-transporting ATPase 10, plasma membrane-type (ACA10) from Arabidopsis thaliana (Mouse-ear cress).